The primary structure comprises 164 residues: Phosphopantetheine adenylyltransferase (164 aa).

A substrate-binding site is contributed by serine 9. ATP contacts are provided by residues 9–10 (SF) and histidine 17. The substrate site is built by lysine 41, valine 78, and arginine 92. Residues 93–95 (GLR), glutamate 103, and 128–134 (VRTITAT) contribute to the ATP site.

This sequence belongs to the bacterial CoaD family. As to quaternary structure, homohexamer. The cofactor is Mg(2+).

It localises to the cytoplasm. It catalyses the reaction (R)-4'-phosphopantetheine + ATP + H(+) = 3'-dephospho-CoA + diphosphate. It participates in cofactor biosynthesis; coenzyme A biosynthesis; CoA from (R)-pantothenate: step 4/5. Functionally, reversibly transfers an adenylyl group from ATP to 4'-phosphopantetheine, yielding dephospho-CoA (dPCoA) and pyrophosphate. This is Phosphopantetheine adenylyltransferase from Brucella abortus (strain 2308).